We begin with the raw amino-acid sequence, 257 residues long: MKLLVKLGGTLLDSAASRDSLCLQIAAARAAGHEVTVVHGGGKQMTRYLTDRGIESRFVGGLRVTSPDTIDAVLKVFAGSVNHELVANLNRAGALAVGLSGIDSFLVEAEQMDPELGAVGRVTGSNPALLHLLTANGYVPVVACVAGDRLGQIYNVNADQMAVACASAFGACRLIFLTDVDGVMDNSNRVRPVLTAAESRQLIDEGIATGGMQAKLNAALSALADGVQQVRIAPGAAPGALQRILAGEEIGTKMVTA.

Substrate contacts are provided by residues 41–42 (GG), R63, and N155.

It belongs to the acetylglutamate kinase family. ArgB subfamily.

It is found in the cytoplasm. The catalysed reaction is N-acetyl-L-glutamate + ATP = N-acetyl-L-glutamyl 5-phosphate + ADP. It participates in amino-acid biosynthesis; L-arginine biosynthesis; N(2)-acetyl-L-ornithine from L-glutamate: step 2/4. Its function is as follows. Catalyzes the ATP-dependent phosphorylation of N-acetyl-L-glutamate. In Solibacter usitatus (strain Ellin6076), this protein is Acetylglutamate kinase.